Reading from the N-terminus, the 2256-residue chain is GON-4-like protein (2256 aa).

Disordered regions lie at residues 1–56 (MLPC…DSAG), 105–213 (PSLE…SLGP), and 227–266 (LFIP…MTYD). Positions 23 to 35 (EDLHLEAAVKPDT) are enriched in basic and acidic residues. Residues 40–53 (DCTSESLSWGQSHD) are compositionally biased toward polar residues. The span at 141–176 (TREDGGDHTVPEEPPSGEHAEEVKAEGGELEMHSEG) shows a compositional bias: basic and acidic residues. Residues 242 to 254 (RKKTKKGTKRKRD) are compositionally biased toward basic residues. Ser-346 is subject to Phosphoserine. A compositionally biased stretch (acidic residues) spans 366 to 395 (EDDDSSDEEYQPDEEEEDETAEESLLESDV). Disordered regions lie at residues 366 to 428 (EDDD…VLSE), 441 to 460 (SAEV…QTRD), and 545 to 573 (DVEN…DTED). Residues 545–571 (DVENEDEADDDDDPEYNFLEDLDEPDT) show a composition bias toward acidic residues. A required for interaction with YY1, SIN3A and HDAC1, and transcriptional repression activity region spans residues 609–1363 (EMGFSNMEDD…DCMEEISSDF (755 aa)). Ser-783 is modified (phosphoserine). 2 stretches are compositionally biased toward low complexity: residues 947–959 (TAGG…TETS) and 1094–1115 (PWSE…LPSL). 4 disordered regions span residues 947–969 (TAGG…KTSP), 1078–1141 (AALP…SPCV), 1241–1288 (AEGK…EAVS), and 1360–1620 (SSDF…SRAR). Over residues 1119–1135 (KFRKPYVRRKPTRRKGA) the composition is skewed to basic residues. Over residues 1364 to 1386 (PKQDIGEEVKEECCMELDRDSPQ) the composition is skewed to basic and acidic residues. Composition is skewed to polar residues over residues 1387-1401 (EKAS…QTAT) and 1429-1444 (LPQS…TVLN). At Ser-1445 the chain carries Phosphoserine. Acidic residues predominate over residues 1475–1495 (GAEEEEEEDFDDLTQDEEDEL). Positions 1496–1510 (SSASEESVLSVPELQ) are enriched in low complexity. Residues 1529 to 1553 (GESEEENSQEENSEPEEEEEEEAEG) show a composition bias toward acidic residues. The segment covering 1606–1620 (RSSHRARSRRGSRAR) has biased composition (basic residues). PAH domains are found at residues 1644–1716 (EQKD…LLPE) and 1726–1797 (EQQA…FDHL). 2 disordered regions span residues 1831 to 1886 (VEEE…LKKS) and 1909 to 1966 (LELV…APIP). The segment covering 1851–1868 (EIGVQHQDKESEWPEAAK) has biased composition (basic and acidic residues). Residues Ser-1921 and Ser-1994 each carry the phosphoserine modification. Disordered stretches follow at residues 2050-2078 (PETS…STRD) and 2110-2148 (IRGT…VLPK). Residues 2111-2129 (RGTSSGASASEAAPTASRE) show a composition bias toward low complexity. Residues 2163-2216 (STGEKVVLWTREADRVILTMCQEQGAQPHTFSVISQQLGNKTPVEVSHRFRELM) form the Myb-like domain. Residues 2223–2256 (CEASSEDEDDATSTSNADQLSDHGDLLSEEELDE) are disordered.

As to quaternary structure, found in a complex with YY1, SIN3A and HDAC1.

The protein localises to the nucleus. In terms of biological role, has transcriptional repressor activity, probably as part of a complex with YY1, SIN3A and HDAC1. Required for B cell lymphopoiesis. The sequence is that of GON-4-like protein (Gon4l) from Rattus norvegicus (Rat).